The sequence spans 509 residues: Maturase K (509 aa).

It belongs to the intron maturase 2 family. MatK subfamily.

It is found in the plastid. The protein localises to the chloroplast. In terms of biological role, usually encoded in the trnK tRNA gene intron. Probably assists in splicing its own and other chloroplast group II introns. The polypeptide is Maturase K (Citrus sinensis (Sweet orange)).